The chain runs to 154 residues: Crossover junction endodeoxyribonuclease RuvC (154 aa).

Active-site residues include Asp7, Glu67, and Asp139. Asp7, Glu67, and Asp139 together coordinate Mg(2+).

This sequence belongs to the RuvC family. In terms of assembly, homodimer which binds Holliday junction (HJ) DNA. The HJ becomes 2-fold symmetrical on binding to RuvC with unstacked arms; it has a different conformation from HJ DNA in complex with RuvA. In the full resolvosome a probable DNA-RuvA(4)-RuvB(12)-RuvC(2) complex forms which resolves the HJ. The cofactor is Mg(2+).

Its subcellular location is the cytoplasm. The catalysed reaction is Endonucleolytic cleavage at a junction such as a reciprocal single-stranded crossover between two homologous DNA duplexes (Holliday junction).. In terms of biological role, the RuvA-RuvB-RuvC complex processes Holliday junction (HJ) DNA during genetic recombination and DNA repair. Endonuclease that resolves HJ intermediates. Cleaves cruciform DNA by making single-stranded nicks across the HJ at symmetrical positions within the homologous arms, yielding a 5'-phosphate and a 3'-hydroxyl group; requires a central core of homology in the junction. The consensus cleavage sequence is 5'-(A/T)TT(C/G)-3'. Cleavage occurs on the 3'-side of the TT dinucleotide at the point of strand exchange. HJ branch migration catalyzed by RuvA-RuvB allows RuvC to scan DNA until it finds its consensus sequence, where it cleaves and resolves the cruciform DNA. The polypeptide is Crossover junction endodeoxyribonuclease RuvC (Synechococcus sp. (strain CC9902)).